A 324-amino-acid polypeptide reads, in one-letter code: Aspartate carbamoyltransferase catalytic subunit (324 aa).

Residues R55 and T56 each contribute to the carbamoyl phosphate site. K83 lines the L-aspartate pocket. R105, H135, and Q138 together coordinate carbamoyl phosphate. L-aspartate-binding residues include R173 and R227. Positions 268 and 269 each coordinate carbamoyl phosphate.

The protein belongs to the aspartate/ornithine carbamoyltransferase superfamily. ATCase family. In terms of assembly, heterododecamer (2C3:3R2) of six catalytic PyrB chains organized as two trimers (C3), and six regulatory PyrI chains organized as three dimers (R2).

It catalyses the reaction carbamoyl phosphate + L-aspartate = N-carbamoyl-L-aspartate + phosphate + H(+). The protein operates within pyrimidine metabolism; UMP biosynthesis via de novo pathway; (S)-dihydroorotate from bicarbonate: step 2/3. Catalyzes the condensation of carbamoyl phosphate and aspartate to form carbamoyl aspartate and inorganic phosphate, the committed step in the de novo pyrimidine nucleotide biosynthesis pathway. The sequence is that of Aspartate carbamoyltransferase catalytic subunit from Nocardioides sp. (strain ATCC BAA-499 / JS614).